Here is a 241-residue protein sequence, read N- to C-terminus: Tumor necrosis factor ligand superfamily member 13 (241 aa).

The propeptide occupies 1 to 95 (MPASSPGHMG…KDGAKSRRRR (95 aa)). The region spanning 107-241 (SVLHLVPVNI…HGTFLGFVKL (135 aa)) is the THD domain. Asn-115 is a glycosylation site (N-linked (GlcNAc...) asparagine). Cysteines 187 and 202 form a disulfide.

It belongs to the tumor necrosis factor family. As to quaternary structure, homotrimer. Post-translationally, the soluble form derives from the membrane form by proteolytic processing.

It is found in the secreted. Functionally, cytokine that binds to TNFRSF13B/TACI and to TNFRSF17/BCMA. Plays a role in the regulation of tumor cell growth. May be involved in monocyte/macrophage-mediated immunological processes. In Mus musculus (Mouse), this protein is Tumor necrosis factor ligand superfamily member 13 (Tnfsf13).